The following is a 687-amino-acid chain: DnaJ protein ERDJ2A (687 aa).

Residues 1 to 8 (MAASEENS) lie on the Lumenal side of the membrane. The chain crosses the membrane as a helical span at residues 9–29 (ALFPIFILTIMAIPLVPYTMV). Over 30–65 (KLSGALSKKQRTIHCQCLECDRSGKYKRSLFKKISN) the chain is Cytoplasmic. A helical membrane pass occupies residues 66–86 (FSTWSNLTLVLLWVVMIFLIY). Topologically, residues 87–190 (YTKNMSREAQ…FLLDIDGASG (104 aa)) are lumenal. A glycan (N-linked (GlcNAc...) asparagine) is linked at asparagine 90. The 66-residue stretch at 99–164 (DPFSILGLEP…VSRENFEKYG (66 aa)) folds into the J domain. A helical transmembrane segment spans residues 191–211 (GILLLWIVGVCILLPLVIAVI). Residues 205–603 (PLVIAVIYLS…IGCDKKQALK (399 aa)) form the SEC63 domain. The Cytoplasmic segment spans residues 212-687 (YLSRSSKYTG…SSEESGSEEE (476 aa)). The interval 619–687 (SDEGAIAEEG…SSEESGSEEE (69 aa)) is disordered. Acidic residues predominate over residues 623–654 (AIAEEGMEEEDEIEEEDYDDDYESEYSEDEDE).

Interacts with OEP61/TPR7. Expressed in leaves, flower buds and flowers.

It localises to the endoplasmic reticulum membrane. Its function is as follows. Required for integral membrane and secreted preprotein translocation across the endoplasmic reticulum membrane. The polypeptide is DnaJ protein ERDJ2A (ERDJ2A) (Arabidopsis thaliana (Mouse-ear cress)).